A 394-amino-acid polypeptide reads, in one-letter code: Ribulose bisphosphate carboxylase large chain (394 aa).

Lys-5 carries the post-translational modification N6,N6,N6-trimethyllysine. Substrate is bound by residues Asn-114 and Thr-164. Lys-166 functions as the Proton acceptor in the catalytic mechanism. Lys-168 serves as a coordination point for substrate. The Mg(2+) site is built by Lys-192, Asp-194, and Glu-195. Lys-192 carries the post-translational modification N6-carboxylysine. His-285 functions as the Proton acceptor in the catalytic mechanism. Residues Arg-286, His-318, and Ser-370 each contribute to the substrate site.

It belongs to the RuBisCO large chain family. Type I subfamily. As to quaternary structure, heterohexadecamer of 8 large chains and 8 small chains; disulfide-linked. The disulfide link is formed within the large subunit homodimers. Mg(2+) serves as cofactor. Post-translationally, the disulfide bond which can form in the large chain dimeric partners within the hexadecamer appears to be associated with oxidative stress and protein turnover.

The protein localises to the plastid. It is found in the chloroplast. The enzyme catalyses 2 (2R)-3-phosphoglycerate + 2 H(+) = D-ribulose 1,5-bisphosphate + CO2 + H2O. It catalyses the reaction D-ribulose 1,5-bisphosphate + O2 = 2-phosphoglycolate + (2R)-3-phosphoglycerate + 2 H(+). In terms of biological role, ruBisCO catalyzes two reactions: the carboxylation of D-ribulose 1,5-bisphosphate, the primary event in carbon dioxide fixation, as well as the oxidative fragmentation of the pentose substrate in the photorespiration process. Both reactions occur simultaneously and in competition at the same active site. This is Ribulose bisphosphate carboxylase large chain (rbcL) from Alisma plantago-aquatica (Common water-plantain).